We begin with the raw amino-acid sequence, 500 residues long: MSSPLSQAFAQNFLGHSPRWYKLTILAFLLSNPLLLWLAGPTVAAWVLVGEFIFTLAMALKCYPLQPGGLLVLEALLLGLASPEALYAELQHNFPVLLLLMFMVAGIYFMKDLLLLLFSRLLLGVRSKTLLSLLFCLLAALLSAFLDALTVTAVVISVAVAFFAVYHRVASGQRASEDYDPATDRQVPELHRAHLEEFRAFLRSLLMHAAVGTALGGVCTLVGEPQNLLIGHEAGWHFVEFFRQVAPVSMPVLAAGLLTCVALEKSRRFGYGAQLPAAVRQVLAEYAAGESRKRGPQQKAALLVQALAALVLMIGLALHVAEVGLIGLLVIVLITAFTGITDEHQIGRAFQEALPFTALLVAFFAVVAVIHQQHLFTPIIQAVLALPAERQPGMLFIANGLLSAISDNVFVATIYITEVKQALDAGHMTREHFDTLAVAINTGTNLPSVATPNGQAAFLFLLTSSIAPLVRLSYGRMVWMALPYTLVMGGLGWWAVSHWL.

Helical transmembrane passes span 28–50 (FLLS…VLVG), 68–88 (GGLL…ALYA), 98–118 (LLLM…LLLF), 121–141 (LLLG…LAAL), 145–165 (FLDA…FFAV), 205–225 (LLMH…VGEP), 244–264 (QVAP…VALE), 301–318 (ALLV…GLAL), 350–370 (FQEA…VAVI), 394–414 (MLFI…VATI), 449–469 (VATP…IAPL), and 477–497 (MVWM…WAVS).

This sequence belongs to the NhaB Na(+)/H(+) (TC 2.A.34) antiporter family.

Its subcellular location is the cell inner membrane. The catalysed reaction is 2 Na(+)(in) + 3 H(+)(out) = 2 Na(+)(out) + 3 H(+)(in). Its function is as follows. Na(+)/H(+) antiporter that extrudes sodium in exchange for external protons. The sequence is that of Na(+)/H(+) antiporter NhaB from Pseudomonas paraeruginosa (strain DSM 24068 / PA7) (Pseudomonas aeruginosa (strain PA7)).